Here is a 171-residue protein sequence, read N- to C-terminus: 6,7-dimethyl-8-ribityllumazine synthase (171 aa).

5-amino-6-(D-ribitylamino)uracil contacts are provided by residues Phe24, 58-60 (ALE), and 82-84 (AVI). A (2S)-2-hydroxy-3-oxobutyl phosphate-binding site is contributed by 87–88 (ET). His90 acts as the Proton donor in catalysis. 5-amino-6-(D-ribitylamino)uracil is bound at residue Asn115. (2S)-2-hydroxy-3-oxobutyl phosphate is bound at residue Arg129. The segment at 150–171 (ALDQLGDDEDEEEDEEDEEERA) is disordered. The segment covering 154–171 (LGDDEDEEEDEEDEEERA) has biased composition (acidic residues).

This sequence belongs to the DMRL synthase family.

The catalysed reaction is (2S)-2-hydroxy-3-oxobutyl phosphate + 5-amino-6-(D-ribitylamino)uracil = 6,7-dimethyl-8-(1-D-ribityl)lumazine + phosphate + 2 H2O + H(+). The protein operates within cofactor biosynthesis; riboflavin biosynthesis; riboflavin from 2-hydroxy-3-oxobutyl phosphate and 5-amino-6-(D-ribitylamino)uracil: step 1/2. Its function is as follows. Catalyzes the formation of 6,7-dimethyl-8-ribityllumazine by condensation of 5-amino-6-(D-ribitylamino)uracil with 3,4-dihydroxy-2-butanone 4-phosphate. This is the penultimate step in the biosynthesis of riboflavin. This is 6,7-dimethyl-8-ribityllumazine synthase from Burkholderia ambifaria (strain ATCC BAA-244 / DSM 16087 / CCUG 44356 / LMG 19182 / AMMD) (Burkholderia cepacia (strain AMMD)).